The chain runs to 343 residues: Uroporphyrinogen decarboxylase (343 aa).

Substrate contacts are provided by residues 23–27 (RQAGR), aspartate 73, tyrosine 151, serine 206, and histidine 319.

This sequence belongs to the uroporphyrinogen decarboxylase family. In terms of assembly, homodimer.

It localises to the cytoplasm. It carries out the reaction uroporphyrinogen III + 4 H(+) = coproporphyrinogen III + 4 CO2. It participates in porphyrin-containing compound metabolism; protoporphyrin-IX biosynthesis; coproporphyrinogen-III from 5-aminolevulinate: step 4/4. Catalyzes the decarboxylation of four acetate groups of uroporphyrinogen-III to yield coproporphyrinogen-III. The polypeptide is Uroporphyrinogen decarboxylase (Sulfurimonas denitrificans (strain ATCC 33889 / DSM 1251) (Thiomicrospira denitrificans (strain ATCC 33889 / DSM 1251))).